A 599-amino-acid chain; its full sequence is Calmodulin-binding protein 60 E (599 aa).

Positions 1-21 (MNKRGYECSQEDTDKLPESKR) are disordered. Positions 1 to 80 (MNKRGYECSQ…LTSRSPEPKR (80 aa)) are calmodulin-binding. The segment at 150 to 273 (EDDEDWTREH…VLHKKLLKAN (124 aa)) is DNA-binding.

It belongs to the plant ACBP60 protein family. As to quaternary structure, interacts with calmodulin (CaM).

It localises to the nucleus. Transcription activator that binds DNA in a sequence-specific manner, likely 5'-GAAATTTTGG-3', to promote the expression of target genes. This is Calmodulin-binding protein 60 E from Arabidopsis thaliana (Mouse-ear cress).